Consider the following 961-residue polypeptide: Endochitinase A (961 aa).

An N-terminal signal peptide occupies residues 1 to 21; the sequence is MAPKLFTFVSALSGLASLASA. The region spanning 28–339 is the GH18 domain; the sequence is SNIAVYYGQG…EKIREILYDL (312 aa). Glu-175 (proton donor) is an active-site residue. Disordered regions lie at residues 338–720, 767–787, 813–842, and 912–933; these read DLDP…TTTE, TDVPGSGSGSSPAQPTITADI, PPATTTEESTSAQPTGEVPSSDGSGSGEVS, and HVPVPSGSGSSPSGTQGGASPT. The segment covering 342 to 355 has biased composition (pro residues); that stretch reads NHPPPTTSPTPTPT. Composition is skewed to low complexity over residues 356 to 510, 519 to 544, 552 to 604, and 612 to 635; these read PSTT…STSS, SSTSVPATSSSVPSSAISPSSTPVIS, TSSS…PETT, and TPGSSVSTGTTSASTLSSSVPATS. Residues 636-665 show a composition bias toward polar residues; that stretch reads GGHTETSTVSTSSANQTPSASTSKPLIPTN. Low complexity predominate over residues 666–720; the sequence is SASSTSTGSVTSTPSAPGVPSSSAGSDETATTSTTDSEPTSTSSGSVTAKPTTTE. Gly-936 carries the GPI-anchor amidated glycine lipid modification. A propeptide spans 937–961 (removed in mature form); it reads AGSRYDVVKGVPALVALALSLLAVL.

Belongs to the glycosyl hydrolase 18 family. Chitinase class III subfamily. In terms of processing, O-glycosylated but not N-glycosylated.

Its subcellular location is the cell membrane. The protein resides in the secreted. It is found in the cell wall. The protein localises to the cell tip. It catalyses the reaction Random endo-hydrolysis of N-acetyl-beta-D-glucosaminide (1-&gt;4)-beta-linkages in chitin and chitodextrins.. In terms of biological role, GPI-anchored chitinase involved in the degradation of chitin, a component of the cell walls of fungi and exoskeletal elements of some animals (including worms and arthropods). Required to reshape the cell wall at the sites where cell wall remodeling and/or cell wall maturation actively take place such as sites of conidia formation. The chain is Endochitinase A (chiA) from Emericella nidulans (Aspergillus nidulans).